The sequence spans 432 residues: MRVVILGSGVVGVTSAWYLSQAGHDVTVIDRESGPAQETSAANAGQISPGYAAPWAAPGVPLKAIKWMFQRHAPLAVRLDGTPFQLKWMWQMLRNCDTRHYMENKGRMVRLAEYSRDCLKTLRAVTGIEYEGCQGGTLQLFRTAQQYENATRDIAVLEDAGVPYQLLEASRLAEVEPALAEVAHKLTGGLRLPNDETGDCQLFTQRLARMAEQAGVTFRFNTPVEKLLYENDQIYGVKCADEIIKADAYVMAFGSYSTAMLKGIVDIPVYPLKGYSLTIPIVEPDGAPVSTILDETYKIAITRFDKRIRVGGMAEIVGFNTDLLQPRRETLEMVVRDLFPRGGHIEQATFWTGLRPMTPDGTPVVGRTRYKNLWLNTGHGTLGWTMACGSGQLLSDILSGRTPAIPYDDLSVARYRSDFTPTRPQRLHSAHN.

3–17 (VVILGSGVVGVTSAW) provides a ligand contact to FAD.

It belongs to the DadA oxidoreductase family. FAD serves as cofactor.

The enzyme catalyses a D-alpha-amino acid + A + H2O = a 2-oxocarboxylate + AH2 + NH4(+). It functions in the pathway amino-acid degradation; D-alanine degradation; NH(3) and pyruvate from D-alanine: step 1/1. In terms of biological role, oxidative deamination of D-amino acids. This is D-amino acid dehydrogenase from Salmonella choleraesuis (strain SC-B67).